A 147-amino-acid polypeptide reads, in one-letter code: Ribonuclease P protein component (147 aa).

The disordered stretch occupies residues 117–147 (TRPRGQSSHRTRASREATSAHTTAVGEQPTQ).

The protein belongs to the RnpA family. In terms of assembly, consists of a catalytic RNA component (M1 or rnpB) and a protein subunit.

It catalyses the reaction Endonucleolytic cleavage of RNA, removing 5'-extranucleotides from tRNA precursor.. In terms of biological role, RNaseP catalyzes the removal of the 5'-leader sequence from pre-tRNA to produce the mature 5'-terminus. It can also cleave other RNA substrates such as 4.5S RNA. The protein component plays an auxiliary but essential role in vivo by binding to the 5'-leader sequence and broadening the substrate specificity of the ribozyme. This chain is Ribonuclease P protein component, found in Thermobifida fusca (strain YX).